We begin with the raw amino-acid sequence, 560 residues long: Protein DA1-related 7 (560 aa).

3 UIM domains span residues 43 to 62 (SEADQIEWAIQDSFNPQETS), 92 to 111 (EEDQQLSKIVEESLKEKGKS), and 155 to 174 (NEDAQLQKVIWESAKGKGQI). The 71-residue stretch at 199–269 (SICDGCKSAI…HVCKKKFPGR (71 aa)) folds into the LIM zinc-binding domain.

In terms of assembly, interacts with ubiquitin.

In terms of biological role, ubiquitin receptor that probably regulates developmental process. The sequence is that of Protein DA1-related 7 (DAR7) from Arabidopsis thaliana (Mouse-ear cress).